A 474-amino-acid chain; its full sequence is PTS system sucrose-specific EIIBC component (474 aa).

Residues 4 to 87 (SQIAQQVIDK…SKLLGIGDMT (84 aa)) enclose the PTS EIIB type-1 domain. The Phosphocysteine intermediate; for EIIB activity role is filled by cysteine 26. One can recognise a PTS EIIC type-1 domain in the interval 107 to 474 (KGLADIFVPI…LGKRAQLKAE (368 aa)). Transmembrane regions (helical) follow at residues 109-129 (LADIFVPIIPAIVAGGLLMGI), 158-178 (FINTIANAPFVFLPVLLGFSA), 182-202 (FGGNPFLGAALGMLLVHPALS), 229-249 (VGYQGTVIPVLVASWVLATLE), 264-284 (ITPLFALFITGLLAFTVIGPI), 303-323 (LGFVGGAIFGTLYAPIVITGM), 345-365 (FIFPIAAMSNIAQGAACLGAA), 376-396 (IAVPSGISALLGITEPAMFGV), 403-423 (PFISAMIGAGISSAVIALFNV), and 444-464 (LAMYCVGMLISASIAFTLTVI).

The protein resides in the cell inner membrane. The enzyme catalyses N(pros)-phospho-L-histidyl-[protein](out) + sucrose = sucrose 6(G)-phosphate(in) + L-histidyl-[protein]. Functionally, the phosphoenolpyruvate-dependent sugar phosphotransferase system (sugar PTS), a major carbohydrate active transport system, catalyzes the phosphorylation of incoming sugar substrates concomitantly with their translocation across the cell membrane. This system is involved in sucrose transport. The polypeptide is PTS system sucrose-specific EIIBC component (scrA) (Pasteurella multocida (strain Pm70)).